The primary structure comprises 333 residues: D-2-hydroxyacid dehydrogenase (NAD+) (333 aa).

Position 100 (tyrosine 100) interacts with 4-methyl-2-oxopentanoate. 8 residues coordinate NAD(+): histidine 155, isoleucine 156, aspartate 175, valine 205, asparagine 211, threonine 232, arginine 234, and aspartate 258. Residue arginine 234 is part of the active site. The active site involves glutamate 263. Residue histidine 295 coordinates 4-methyl-2-oxopentanoate. The Proton donor role is filled by histidine 295.

This sequence belongs to the D-isomer specific 2-hydroxyacid dehydrogenase family. As to quaternary structure, homodimer.

The enzyme catalyses a (2R)-2-hydroxycarboxylate + NAD(+) = a 2-oxocarboxylate + NADH + H(+). The catalysed reaction is (2R)-hydroxy-4-methylpentanoate + NAD(+) = 4-methyl-2-oxopentanoate + NADH + H(+). It catalyses the reaction (R)-3-phenyllactate + NAD(+) = 3-phenylpyruvate + NADH + H(+). Completely inhibited In the presence of 0.1 mM Hg(2+). No influence on the activity could be detected with Mg(2+) and Ca(2+) and only very weak effects with Cd(2+), Co(2+) and Mn(2+). Reducing agents and thiol group reagents do not affect catalytic activity. Functionally, catalyzes the NADH-dependent reversible reduction of various 2-ketocarboxylic acids to the corresponding D-2-hydroxycarboxylic acids. In vitro can use various substrates, including 4-methyl-2-oxopentanoate (2-oxoisocaproate), 2-oxopentanoate, 2-oxohexanoate and phenylpyruvate. This chain is D-2-hydroxyacid dehydrogenase (NAD+), found in Lacticaseibacillus paracasei (Lactobacillus paracasei).